The sequence spans 389 residues: Phospho-N-acetylmuramoyl-pentapeptide-transferase (389 aa).

10 consecutive transmembrane segments (helical) span residues 25 to 45 (RAVMATITALLIGLVCGPAVI), 73 to 93 (TMGGVLILLGIAVATLLWADL), 97 to 117 (FIWIVMLVTFGFGVIGWVDDY), 135 to 155 (FWQSVIGLFAAVYLAFSVSEA), 190 to 210 (ISYPLGVWGFIVLTYLVIVGA), 222 to 242 (GLVIMPVVLVGASLGVFAYVM), 259 to 279 (AGELLIFCSAMGGAGLAFLWF), 287 to 307 (FMGDVGALALGGALGTVAVIV), 311 to 331 (IVLFIMGGIFVAETLSVMLQV), and 366 to 386 (QVVVRFWIITLMLCLFGLSTL).

It belongs to the glycosyltransferase 4 family. MraY subfamily. It depends on Mg(2+) as a cofactor.

The protein localises to the cell inner membrane. It carries out the reaction UDP-N-acetyl-alpha-D-muramoyl-L-alanyl-gamma-D-glutamyl-meso-2,6-diaminopimeloyl-D-alanyl-D-alanine + di-trans,octa-cis-undecaprenyl phosphate = di-trans,octa-cis-undecaprenyl diphospho-N-acetyl-alpha-D-muramoyl-L-alanyl-D-glutamyl-meso-2,6-diaminopimeloyl-D-alanyl-D-alanine + UMP. It functions in the pathway cell wall biogenesis; peptidoglycan biosynthesis. Catalyzes the initial step of the lipid cycle reactions in the biosynthesis of the cell wall peptidoglycan: transfers peptidoglycan precursor phospho-MurNAc-pentapeptide from UDP-MurNAc-pentapeptide onto the lipid carrier undecaprenyl phosphate, yielding undecaprenyl-pyrophosphoryl-MurNAc-pentapeptide, known as lipid I. This Paraburkholderia phytofirmans (strain DSM 17436 / LMG 22146 / PsJN) (Burkholderia phytofirmans) protein is Phospho-N-acetylmuramoyl-pentapeptide-transferase.